The primary structure comprises 569 residues: Urease subunit beta (569 aa).

One can recognise a Urease domain in the interval 131 to 569 (GGIDTHIHFI…VSLAQLFSIF (439 aa)). Residues His-136, His-138, and Lys-219 each coordinate Ni(2+). N6-carboxylysine is present on Lys-219. Position 221 (His-221) interacts with substrate. Ni(2+) contacts are provided by His-248 and His-274. Residue His-322 is the Proton donor of the active site. A Ni(2+)-binding site is contributed by Asp-362.

The protein belongs to the metallo-dependent hydrolases superfamily. Urease alpha subunit family. In terms of assembly, heterohexamer of 3 UreA (alpha) and 3 UreB (beta) subunits. Ni cation serves as cofactor. Post-translationally, carboxylation allows a single lysine to coordinate two nickel ions.

Its subcellular location is the cytoplasm. The enzyme catalyses urea + 2 H2O + H(+) = hydrogencarbonate + 2 NH4(+). It functions in the pathway nitrogen metabolism; urea degradation; CO(2) and NH(3) from urea (urease route): step 1/1. This is Urease subunit beta from Helicobacter pylori (strain Shi470).